The chain runs to 164 residues: Dehydrin Rab16C (164 aa).

Over residues 42–51 the composition is skewed to gly residues; that stretch reads MGGHHAGAGG. The interval 42-164 is disordered; the sequence is MGGHHAGAGG…KIKEKLPGQH (123 aa). The segment covering 105-115 has biased composition (low complexity); it reads GNNQQQQQMMG. The segment covering 128–138 has biased composition (gly residues); it reads GMTGAGTGTGV. Residues 147–164 are compositionally biased toward basic and acidic residues; the sequence is GEKKGFMDKIKEKLPGQH.

It belongs to the plant dehydrin family.

The protein is Dehydrin Rab16C (RAB16C) of Oryza sativa subsp. japonica (Rice).